We begin with the raw amino-acid sequence, 400 residues long: Acetate kinase (400 aa).

Asparagine 10 is a Mg(2+) binding site. An ATP-binding site is contributed by lysine 17. Substrate is bound at residue arginine 91. Residue aspartate 150 is the Proton donor/acceptor of the active site. ATP contacts are provided by residues 210-214 (HLGNG), 285-287 (DCR), and 333-337 (GIGEN). Glutamate 387 is a binding site for Mg(2+).

This sequence belongs to the acetokinase family. Homodimer. Requires Mg(2+) as cofactor. Mn(2+) is required as a cofactor.

It localises to the cytoplasm. The catalysed reaction is acetate + ATP = acetyl phosphate + ADP. Its pathway is metabolic intermediate biosynthesis; acetyl-CoA biosynthesis; acetyl-CoA from acetate: step 1/2. In terms of biological role, catalyzes the formation of acetyl phosphate from acetate and ATP. Can also catalyze the reverse reaction. This chain is Acetate kinase, found in Escherichia coli O157:H7.